We begin with the raw amino-acid sequence, 509 residues long: Maturase K (509 aa).

The protein belongs to the intron maturase 2 family. MatK subfamily.

It localises to the plastid. The protein resides in the chloroplast. Functionally, usually encoded in the trnK tRNA gene intron. Probably assists in splicing its own and other chloroplast group II introns. This chain is Maturase K, found in Galbulimima belgraveana (Northern pigeonberry ash).